The sequence spans 235 residues: Enolase-phosphatase E1 (235 aa).

Asp10 and Glu12 together coordinate Mg(2+). Substrate contacts are provided by residues 130-131 (SS) and Lys169. Asp194 serves as a coordination point for Mg(2+).

Belongs to the HAD-like hydrolase superfamily. MasA/MtnC family. Monomer. Requires Mg(2+) as cofactor.

It localises to the cytoplasm. The protein localises to the nucleus. The enzyme catalyses 5-methylsulfanyl-2,3-dioxopentyl phosphate + H2O = 1,2-dihydroxy-5-(methylsulfanyl)pent-1-en-3-one + phosphate. Its pathway is amino-acid biosynthesis; L-methionine biosynthesis via salvage pathway; L-methionine from S-methyl-5-thio-alpha-D-ribose 1-phosphate: step 3/6. It functions in the pathway amino-acid biosynthesis; L-methionine biosynthesis via salvage pathway; L-methionine from S-methyl-5-thio-alpha-D-ribose 1-phosphate: step 4/6. Its function is as follows. Bifunctional enzyme that catalyzes the enolization of 2,3-diketo-5-methylthiopentyl-1-phosphate (DK-MTP-1-P) into the intermediate 2-hydroxy-3-keto-5-methylthiopentenyl-1-phosphate (HK-MTPenyl-1-P), which is then dephosphorylated to form the acireductone 1,2-dihydroxy-3-keto-5-methylthiopentene (DHK-MTPene). The sequence is that of Enolase-phosphatase E1 from Komagataella phaffii (strain GS115 / ATCC 20864) (Yeast).